Here is a 295-residue protein sequence, read N- to C-terminus: Bifunctional protein FolD (295 aa).

NADP(+) is bound by residues glycine 166 to serine 168, serine 195, and isoleucine 236.

It belongs to the tetrahydrofolate dehydrogenase/cyclohydrolase family. In terms of assembly, homodimer.

It catalyses the reaction (6R)-5,10-methylene-5,6,7,8-tetrahydrofolate + NADP(+) = (6R)-5,10-methenyltetrahydrofolate + NADPH. The catalysed reaction is (6R)-5,10-methenyltetrahydrofolate + H2O = (6R)-10-formyltetrahydrofolate + H(+). The protein operates within one-carbon metabolism; tetrahydrofolate interconversion. Its function is as follows. Catalyzes the oxidation of 5,10-methylenetetrahydrofolate to 5,10-methenyltetrahydrofolate and then the hydrolysis of 5,10-methenyltetrahydrofolate to 10-formyltetrahydrofolate. The sequence is that of Bifunctional protein FolD from Chlorobium phaeobacteroides (strain DSM 266 / SMG 266 / 2430).